A 163-amino-acid polypeptide reads, in one-letter code: IQSTSMDQGILTEDSMNSFIRTLIQAGIWKNKVPKQTARTKDGMQTTVKKTEAEADAMASKDTRLGFQPVVSVDAELLRQQRRFSSPRVLLSENTPLEPPPLYLTEEPMVLNRTSRRKREGKSHRGEYSVCDSESRWVTDKSSAVDIRGHQVTVLGEIRMGSS.

The N-terminal stretch at 1-3 is a signal peptide; the sequence is IQS. A propeptide spanning residues 4-119 is cleaved from the precursor; sequence TSMDQGILTE…VLNRTSRRKR (116 aa). An N-linked (GlcNAc...) asparagine glycan is attached at Asn-112. The segment at 114-133 is disordered; sequence TSRRKREGKSHRGEYSVCDS. Residues 123–133 show a composition bias toward basic and acidic residues; it reads SHRGEYSVCDS.

The protein belongs to the NGF-beta family.

The protein resides in the secreted. Functionally, seems to promote the survival of visceral and proprioceptive sensory neurons. This chain is Neurotrophin-3 (NTF3), found in Lichanura trivirgata (Rosy boa).